The following is a 170-amino-acid chain: Ureidoglycolate lyase (170 aa).

Belongs to the ureidoglycolate lyase family. As to quaternary structure, homodimer. Requires Ni(2+) as cofactor.

The enzyme catalyses (S)-ureidoglycolate = urea + glyoxylate. It functions in the pathway nitrogen metabolism; (S)-allantoin degradation. Functionally, catalyzes the catabolism of the allantoin degradation intermediate (S)-ureidoglycolate, generating urea and glyoxylate. Involved in the utilization of allantoin as nitrogen source. This Pseudomonas syringae pv. tomato (strain ATCC BAA-871 / DC3000) protein is Ureidoglycolate lyase.